Reading from the N-terminus, the 145-residue chain is MISVSGAVKRMWLLLAIVVVAVVGGLGIYRLHSIFGVHEQPTVMVKPDFDVPLFNPKRVTYEVFGPAKTAKIAYLDPDARVHRLDSVSLPWSVTVETTLPAVSVNLMAQSNADVISCRIIVNGAVKDERSETSPRALTSCQVSSG.

A helical membrane pass occupies residues 11–31; it reads MWLLLAIVVVAVVGGLGIYRL.

It belongs to the MmpS family.

The protein localises to the cell membrane. The chain is Probable transport accessory protein MmpS2 (mmpS2) from Mycobacterium bovis (strain ATCC BAA-935 / AF2122/97).